Reading from the N-terminus, the 130-residue chain is MRGYAWGAASVLLVTLAQLLMKWGMAQIPLMSFADVTLNLFMQYWLPLVVVSGGIFGYALSMLCWFFALHHLPLNRAYPLLSVSYALVYLAAVILPWFNESATLLKTLGTLFILFGVWLINSQAKVKTPQ.

The Cytoplasmic portion of the chain corresponds to 1–4 (MRGY). A helical membrane pass occupies residues 5 to 25 (AWGAASVLLVTLAQLLMKWGM). Residues 26–47 (AQIPLMSFADVTLNLFMQYWLP) are Periplasmic-facing. The chain crosses the membrane as a helical span at residues 48–68 (LVVVSGGIFGYALSMLCWFFA). Residues 69–77 (LHHLPLNRA) are Cytoplasmic-facing. Residues 78–98 (YPLLSVSYALVYLAAVILPWF) form a helical membrane-spanning segment. Position 99 (N99) is a topological domain, periplasmic. A helical transmembrane segment spans residues 100–120 (ESATLLKTLGTLFILFGVWLI). The Cytoplasmic segment spans residues 121–130 (NSQAKVKTPQ).

This sequence belongs to the ArnF family. As to quaternary structure, heterodimer of ArnE and ArnF.

The protein resides in the cell inner membrane. It functions in the pathway bacterial outer membrane biogenesis; lipopolysaccharide biosynthesis. In terms of biological role, translocates 4-amino-4-deoxy-L-arabinose-phosphoundecaprenol (alpha-L-Ara4N-phosphoundecaprenol) from the cytoplasmic to the periplasmic side of the inner membrane. This Serratia proteamaculans (strain 568) protein is Probable 4-amino-4-deoxy-L-arabinose-phosphoundecaprenol flippase subunit ArnF.